The chain runs to 943 residues: Isoleucine--tRNA ligase (943 aa).

The 'HIGH' region signature appears at Pro-58–His-68. Glu-567 contributes to the L-isoleucyl-5'-AMP binding site. Residues Lys-608–Ser-612 carry the 'KMSKS' region motif. An ATP-binding site is contributed by Lys-611. 4 residues coordinate Zn(2+): Cys-906, Cys-909, Cys-926, and Cys-929.

This sequence belongs to the class-I aminoacyl-tRNA synthetase family. IleS type 1 subfamily. As to quaternary structure, monomer. Zn(2+) serves as cofactor.

The protein localises to the cytoplasm. It catalyses the reaction tRNA(Ile) + L-isoleucine + ATP = L-isoleucyl-tRNA(Ile) + AMP + diphosphate. Its function is as follows. Catalyzes the attachment of isoleucine to tRNA(Ile). As IleRS can inadvertently accommodate and process structurally similar amino acids such as valine, to avoid such errors it has two additional distinct tRNA(Ile)-dependent editing activities. One activity is designated as 'pretransfer' editing and involves the hydrolysis of activated Val-AMP. The other activity is designated 'posttransfer' editing and involves deacylation of mischarged Val-tRNA(Ile). This Pseudomonas putida (strain GB-1) protein is Isoleucine--tRNA ligase.